The sequence spans 681 residues: UvrABC system protein B (681 aa).

Residues 30 to 419 (QGVRDGRHWQ…GEVVELLVRP (390 aa)) form the Helicase ATP-binding domain. An ATP-binding site is contributed by 43-50 (GVTGSGKT). The short motif at 96-119 (YYDFYQPEAYLPSLDKYIAKDLRI) is the Beta-hairpin element. Residues 435–601 (QIDNLLAEIR…SIVKSVDQIL (167 aa)) enclose the Helicase C-terminal domain. The 36-residue stretch at 641–676 (YAIVEGLRLEMQEAAEHMEYEKAAYLRDEITKMEQV) folds into the UVR domain.

This sequence belongs to the UvrB family. In terms of assembly, forms a heterotetramer with UvrA during the search for lesions. Interacts with UvrC in an incision complex.

The protein resides in the cytoplasm. Its function is as follows. The UvrABC repair system catalyzes the recognition and processing of DNA lesions. A damage recognition complex composed of 2 UvrA and 2 UvrB subunits scans DNA for abnormalities. Upon binding of the UvrA(2)B(2) complex to a putative damaged site, the DNA wraps around one UvrB monomer. DNA wrap is dependent on ATP binding by UvrB and probably causes local melting of the DNA helix, facilitating insertion of UvrB beta-hairpin between the DNA strands. Then UvrB probes one DNA strand for the presence of a lesion. If a lesion is found the UvrA subunits dissociate and the UvrB-DNA preincision complex is formed. This complex is subsequently bound by UvrC and the second UvrB is released. If no lesion is found, the DNA wraps around the other UvrB subunit that will check the other stand for damage. The sequence is that of UvrABC system protein B from Chlorobium chlorochromatii (strain CaD3).